Here is an 83-residue protein sequence, read N- to C-terminus: Cell division topological specificity factor (83 aa).

It belongs to the MinE family.

In terms of biological role, prevents the cell division inhibition by proteins MinC and MinD at internal division sites while permitting inhibition at polar sites. This ensures cell division at the proper site by restricting the formation of a division septum at the midpoint of the long axis of the cell. The chain is Cell division topological specificity factor from Marinobacter nauticus (strain ATCC 700491 / DSM 11845 / VT8) (Marinobacter aquaeolei).